We begin with the raw amino-acid sequence, 245 residues long: Probable transcriptional regulatory protein Cbei_4222 (245 aa).

Belongs to the TACO1 family.

The protein resides in the cytoplasm. The chain is Probable transcriptional regulatory protein Cbei_4222 from Clostridium beijerinckii (strain ATCC 51743 / NCIMB 8052) (Clostridium acetobutylicum).